A 423-amino-acid chain; its full sequence is Zinc-type alcohol dehydrogenase-like protein C1198.01 (423 aa).

The disordered stretch occupies residues 14-36; sequence KQLGHREVSEGSTQPKPDPSGAT. Positions 74, 97, 127, 130, 133, and 141 each coordinate Zn(2+).

Belongs to the zinc-containing alcohol dehydrogenase family. Class-III subfamily. Zn(2+) serves as cofactor.

Its subcellular location is the golgi apparatus. This Schizosaccharomyces pombe (strain 972 / ATCC 24843) (Fission yeast) protein is Zinc-type alcohol dehydrogenase-like protein C1198.01.